The following is an 85-amino-acid chain: Large ribosomal subunit protein bL31B (85 aa).

Belongs to the bacterial ribosomal protein bL31 family. Type B subfamily. As to quaternary structure, part of the 50S ribosomal subunit.

The protein is Large ribosomal subunit protein bL31B of Pseudomonas entomophila (strain L48).